Here is a 164-residue protein sequence, read N- to C-terminus: 6,7-dimethyl-8-ribityllumazine synthase (164 aa).

5-amino-6-(D-ribitylamino)uracil is bound by residues Phe24, 62–64 (SFE), and 86–88 (AVI). Residue 91–92 (QT) participates in (2S)-2-hydroxy-3-oxobutyl phosphate binding. Catalysis depends on His94, which acts as the Proton donor. Phe119 is a binding site for 5-amino-6-(D-ribitylamino)uracil. Arg133 lines the (2S)-2-hydroxy-3-oxobutyl phosphate pocket.

It belongs to the DMRL synthase family.

The catalysed reaction is (2S)-2-hydroxy-3-oxobutyl phosphate + 5-amino-6-(D-ribitylamino)uracil = 6,7-dimethyl-8-(1-D-ribityl)lumazine + phosphate + 2 H2O + H(+). It functions in the pathway cofactor biosynthesis; riboflavin biosynthesis; riboflavin from 2-hydroxy-3-oxobutyl phosphate and 5-amino-6-(D-ribitylamino)uracil: step 1/2. Its function is as follows. Catalyzes the formation of 6,7-dimethyl-8-ribityllumazine by condensation of 5-amino-6-(D-ribitylamino)uracil with 3,4-dihydroxy-2-butanone 4-phosphate. This is the penultimate step in the biosynthesis of riboflavin. This chain is 6,7-dimethyl-8-ribityllumazine synthase, found in Synechocystis sp. (strain ATCC 27184 / PCC 6803 / Kazusa).